Consider the following 934-residue polypeptide: 3-hydroxy-3-methylglutaryl-coenzyme A reductase (934 aa).

The Lumenal portion of the chain corresponds to 1-111 (MFYHGASANQ…VLNLVRGAET (111 aa)). The chain crosses the membrane as a helical span at residues 112–132 (FDIALVTCAYIAMFYTLFNLF). The region spanning 113–280 (DIALVTCAYI…STFLSAILSL (168 aa)) is the SSD domain. Residues 133–141 (ARMRAVGSK) are Cytoplasmic-facing. A helical transmembrane segment spans residues 142-162 (VWLGLSTLVSSFFAFLFALYI). Topologically, residues 163–168 (TTRVLD) are lumenal. A helical transmembrane segment spans residues 169–189 (LSIPFLSLSEGIPFFVAVVGF). The Cytoplasmic segment spans residues 190–231 (NNKILLAEKVLQNQLNAQSSKNDAPTVLYQALREQGPLLLRD). A helical membrane pass occupies residues 232-252 (HLFMITAFLGCSFYASYLDGL). The Lumenal segment spans residues 253–256 (KNFC). Residues 257-277 (ILAALILAFDILTTSTFLSAI) traverse the membrane as a helical segment. At 278-334 (LSLKLEINQIHRSTLLREQLEDDGLTETTVDDVLKSNSLAGTKTFTDAPSTLVTVAK) the chain is on the cytoplasmic side. Residues 335 to 355 (VAGVSVFFGLHFYGFGSAWLS) traverse the membrane as a helical segment. Topologically, residues 356-421 (DLSAGNETND…GLISTAARDK (66 aa)) are lumenal. Residues Asn361, Asn364, and Asn382 are each glycosylated (N-linked (GlcNAc...) asparagine). Residues 422 to 442 (YISKFILFAFAVSASINVYLL) traverse the membrane as a helical segment. At 443–934 (NVARIHTTRL…MQHNRAAAKK (492 aa)) the chain is on the cytoplasmic side. Glu618 (charge relay system) is an active-site residue. CoA is bound at residue 624–630 (SAMRGCK). NADP(+) is bound by residues 685–687 (SRF) and 712–720 (DAMGMNMIS). The active-site Charge relay system is Lys752. Position 781 to 783 (781 to 783 (VLK)) interacts with CoA. The Charge relay system role is filled by Asp828. 923–924 (SH) contacts CoA. His924 (proton donor) is an active-site residue. 928–929 (NR) is an NADP(+) binding site.

Belongs to the HMG-CoA reductase family.

The protein localises to the endoplasmic reticulum membrane. The enzyme catalyses (R)-mevalonate + 2 NADP(+) + CoA = (3S)-3-hydroxy-3-methylglutaryl-CoA + 2 NADPH + 2 H(+). It functions in the pathway metabolic intermediate biosynthesis; (R)-mevalonate biosynthesis; (R)-mevalonate from acetyl-CoA: step 3/3. Its function is as follows. HMG-CoA reductase; part of the first module of ergosterol biosynthesis pathway that includes the early steps of the pathway, conserved across all eukaryotes, and which results in the formation of mevalonate from acetyl-coenzyme A (acetyl-CoA). In this module, the cytosolic acetyl-CoA acetyltransferase catalyzes the formation of acetoacetyl-CoA. The hydroxymethylglutaryl-CoA synthase then condenses acetyl-CoA with acetoacetyl-CoA to form HMG-CoA. The rate-limiting step of the early module is the reduction to mevalonate by the 3-hydroxy-3-methylglutaryl-coenzyme A (HMG-CoA) reductase. The chain is 3-hydroxy-3-methylglutaryl-coenzyme A reductase from Cyberlindnera jadinii (Torula yeast).